Reading from the N-terminus, the 478-residue chain is Glutamate--tRNA ligase (478 aa).

The short motif at 15-25 (PSPTGFLHIGG) is the 'HIGH' region element. Positions 244 to 248 (KLSKR) match the 'KMSKS' region motif. K247 serves as a coordination point for ATP.

Belongs to the class-I aminoacyl-tRNA synthetase family. Glutamate--tRNA ligase type 1 subfamily. In terms of assembly, monomer.

Its subcellular location is the cytoplasm. The catalysed reaction is tRNA(Glu) + L-glutamate + ATP = L-glutamyl-tRNA(Glu) + AMP + diphosphate. In terms of biological role, catalyzes the attachment of glutamate to tRNA(Glu) in a two-step reaction: glutamate is first activated by ATP to form Glu-AMP and then transferred to the acceptor end of tRNA(Glu). The polypeptide is Glutamate--tRNA ligase (Bradyrhizobium sp. (strain ORS 278)).